Here is a 300-residue protein sequence, read N- to C-terminus: Ribosomal protein L11 methyltransferase (300 aa).

Residues threonine 152, glycine 173, aspartate 195, and asparagine 234 each coordinate S-adenosyl-L-methionine.

It belongs to the methyltransferase superfamily. PrmA family.

It localises to the cytoplasm. The catalysed reaction is L-lysyl-[protein] + 3 S-adenosyl-L-methionine = N(6),N(6),N(6)-trimethyl-L-lysyl-[protein] + 3 S-adenosyl-L-homocysteine + 3 H(+). Functionally, methylates ribosomal protein L11. The chain is Ribosomal protein L11 methyltransferase from Burkholderia mallei (strain NCTC 10247).